A 426-amino-acid polypeptide reads, in one-letter code: Glutamate/glutamine/aspartate/asparagine transport system permease protein BztB (426 aa).

A run of 8 helical transmembrane segments spans residues 25 to 45 (SITI…WLLN), 96 to 116 (LLVS…IGVL), 132 to 152 (VETF…TILA), 211 to 231 (LPVS…FWGW), 252 to 272 (WWPS…GLGF), 293 to 313 (SFTA…AEIV), 340 to 360 (SLVI…SQFL), and 396 to 416 (MLLM…LMNL). In terms of domain architecture, ABC transmembrane type-1 spans 92–414 (LLNTLLVSVL…TISLTISSLM (323 aa)).

Belongs to the binding-protein-dependent transport system permease family. HisMQ subfamily. In terms of assembly, bztB and BztC form a heterodimer which can form a membrane complex with a homodimer of BztD.

Its subcellular location is the cell inner membrane. Its function is as follows. Part of a binding-protein-dependent transport system for glutamate, glutamine, aspartate and asparagine. Probably responsible for the translocation of the substrate across the membrane. This Rhodobacter capsulatus (strain ATCC BAA-309 / NBRC 16581 / SB1003) protein is Glutamate/glutamine/aspartate/asparagine transport system permease protein BztB (bztB).